A 338-amino-acid chain; its full sequence is MKRMIALDGAQGEGGGQILRSALSLSMITGQPFTITGIRAGRAKPGLLRQHLTAVKAAAEICRATVEGAELGSQRLVFRPGTVRGGDYRFAIGSAGSCTLVLQTVLPALWFADGPSRVEVSGGTDNPSAPPADFIRRVLEPLLAKIGVHQQTTLLRHGFYPAGGGVVATEVSPVASFNSLQLGERGNIVQMRGEVLLAGVPRHVAEREIATLAGSFSLHEQNIHNLPRDQGPGNTVSLEVESENITERFFVVGEKRVSAEVVAAQLVKEVKRYLASPAAVGEYLADQLVLPMALAGTGEFTVAHPSCHLLTNIAVVERFLPVRFGLIETDGVTRVSIE.

Residues glutamine 103 and tyrosine 283–glutamine 287 each bind ATP. Histidine 308 (tele-AMP-histidine intermediate) is an active-site residue.

This sequence belongs to the RNA 3'-terminal cyclase family. Type 1 subfamily.

It localises to the cytoplasm. The catalysed reaction is a 3'-end 3'-phospho-ribonucleotide-RNA + ATP = a 3'-end 2',3'-cyclophospho-ribonucleotide-RNA + AMP + diphosphate. Catalyzes the conversion of 3'-phosphate to a 2',3'-cyclic phosphodiester at the end of RNA. The mechanism of action of the enzyme occurs in 3 steps: (A) adenylation of the enzyme by ATP; (B) transfer of adenylate to an RNA-N3'P to produce RNA-N3'PP5'A; (C) and attack of the adjacent 2'-hydroxyl on the 3'-phosphorus in the diester linkage to produce the cyclic end product. The biological role of this enzyme is unknown but it is likely to function in some aspects of cellular RNA processing. The chain is RNA 3'-terminal phosphate cyclase from Escherichia coli O45:K1 (strain S88 / ExPEC).